A 382-amino-acid chain; its full sequence is Mannitol-1-phosphate 5-dehydrogenase (382 aa).

3–14 (ALHFGAGNIGRG) is a binding site for NAD(+). Position 269 is an N6-acetyllysine (K269).

Belongs to the mannitol dehydrogenase family.

The enzyme catalyses D-mannitol 1-phosphate + NAD(+) = beta-D-fructose 6-phosphate + NADH + H(+). This Escherichia coli O9:H4 (strain HS) protein is Mannitol-1-phosphate 5-dehydrogenase.